Here is a 366-residue protein sequence, read N- to C-terminus: Putative amino-acid transporter MJ1196 (366 aa).

11 helical membrane passes run 14-34 (ITSIVGGGIFVLSPLTYLLFG), 37-57 (IIWGWALLIFVSLIMASPFAY), 87-107 (ILWLSGVFALSGVVSFFEIVF), 111-131 (FNVSYVGLCLIVILTALILGG), 141-161 (IFGILTITIILYIVFSNGIKI), 173-193 (ILTIYFGLWTATGWEGITMPL), 205-225 (GLLVGTFIIGVLYLLFSLTIV), 247-267 (FLLAGMLLIISSCAFSVLFTL), 291-311 (IPYYGVILNTLLVIILLIFDA), 314-334 (LVDMSMFSTLIAYFLLYLAVF), and 346-366 (LISMLITGLLILFRVYNFIIL).

The protein belongs to the amino acid-polyamine-organocation (APC) superfamily.

Its subcellular location is the cell membrane. This is Putative amino-acid transporter MJ1196 from Methanocaldococcus jannaschii (strain ATCC 43067 / DSM 2661 / JAL-1 / JCM 10045 / NBRC 100440) (Methanococcus jannaschii).